Reading from the N-terminus, the 519-residue chain is S-type anion channel SLAH2 (519 aa).

Positions Met-1 to Phe-31 are disordered. Over Met-1–Leu-140 the chain is Cytoplasmic. Residues Leu-20 to Gly-29 are compositionally biased toward polar residues. Residues Ser-77 and Ser-85 each carry the phosphoserine modification. Residues Leu-141–Trp-161 form a helical membrane-spanning segment. Residues Lys-162–Trp-185 are Extracellular-facing. A helical membrane pass occupies residues Ile-186–Phe-206. Residues Glu-207 to Asn-220 lie on the Cytoplasmic side of the membrane. Residues Phe-221 to Ile-241 traverse the membrane as a helical segment. At Ser-242–Thr-247 the chain is on the extracellular side. Residues Leu-248 to Met-268 traverse the membrane as a helical segment. At Ser-269–Pro-281 the chain is on the cytoplasmic side. The chain crosses the membrane as a helical span at residues Thr-282 to Leu-302. The Extracellular segment spans residues Lys-303–Glu-304. Residues Gly-305–Tyr-325 form a helical membrane-spanning segment. The Cytoplasmic segment spans residues Gln-326 to Pro-340. The helical transmembrane segment at Val-341–Ala-361 threads the bilayer. Ser-362 is a topological domain (extracellular). Residues Phe-363 to Cys-383 traverse the membrane as a helical segment. Topologically, residues Arg-384–Arg-389 are cytoplasmic. The helical transmembrane segment at Gly-390–Ala-410 threads the bilayer. At Thr-411–Lys-424 the chain is on the extracellular side. A helical transmembrane segment spans residues Ile-425–Thr-445. Topologically, residues Val-446–Asn-519 are cytoplasmic. The tract at residues Pro-495–Asn-519 is disordered. A compositionally biased stretch (polar residues) spans Val-510–Asn-519.

It belongs to the SLAC1 S-type anion channel family. In terms of assembly, homotrimer. As to expression, expressed in lateral root primordia and tap root tips.

The protein resides in the cell membrane. Functionally, slow, weak voltage-dependent S-type anion efflux channel involved in maintenance of anion homeostasis. The protein is S-type anion channel SLAH2 (SLAH2) of Arabidopsis thaliana (Mouse-ear cress).